The chain runs to 81 residues: Photosystem I iron-sulfur center (81 aa).

4Fe-4S ferredoxin-type domains lie at 2–31 (AHSV…MVPR) and 39–68 (IASA…VRVY). Residues cysteine 11, cysteine 14, cysteine 17, cysteine 21, cysteine 48, cysteine 51, cysteine 54, and cysteine 58 each coordinate [4Fe-4S] cluster.

The eukaryotic PSI reaction center is composed of at least 11 subunits. Requires [4Fe-4S] cluster as cofactor.

The protein localises to the plastid. Its subcellular location is the chloroplast thylakoid membrane. The enzyme catalyses reduced [plastocyanin] + hnu + oxidized [2Fe-2S]-[ferredoxin] = oxidized [plastocyanin] + reduced [2Fe-2S]-[ferredoxin]. In terms of biological role, apoprotein for the two 4Fe-4S centers FA and FB of photosystem I (PSI); essential for photochemical activity. FB is the terminal electron acceptor of PSI, donating electrons to ferredoxin. The C-terminus interacts with PsaA/B/D and helps assemble the protein into the PSI complex. Required for binding of PsaD and PsaE to PSI. PSI is a plastocyanin/cytochrome c6-ferredoxin oxidoreductase, converting photonic excitation into a charge separation, which transfers an electron from the donor P700 chlorophyll pair to the spectroscopically characterized acceptors A0, A1, FX, FA and FB in turn. This is Photosystem I iron-sulfur center from Antithamnion sp. (Red alga).